The primary structure comprises 517 residues: General transcription factor IIF subunit 1 (517 aa).

Alanine 2 is subject to N-acetylalanine. Position 156 is a phosphothreonine (threonine 156). Positions 178–458 are disordered; that stretch reads QQRRLKDQDQ…SGDVQVTEDA (281 aa). Residues 210-225 show a composition bias toward acidic residues; sequence LEDDLEMSSDDSEASG. Serine 217, serine 218, serine 221, and serine 224 each carry phosphoserine. Basic residues predominate over residues 232–251; that stretch reads PKAKKKAPPSKGGRKKKKKK. Composition is skewed to acidic residues over residues 255–270 and 303–325; these read DEAF…EGQE and EQSE…EEEE. Threonine 331 carries the post-translational modification Phosphothreonine. Over residues 343-355 the composition is skewed to acidic residues; sequence EESDSSEESDIDS. Over residues 364–374 the composition is skewed to basic residues; that stretch reads AKKKTPPKRER. Residues serine 377, serine 380, serine 381, and serine 385 each carry the phosphoserine modification. The span at 377-391 shows a compositional bias: low complexity; it reads SGGSSRGNSRPGTPS. A Phosphothreonine modification is found at threonine 389. Serine 391 is subject to Phosphoserine. Residues 392-401 show a composition bias toward polar residues; it reads TEAGSTSSTL. Lysine 407 bears the N6-acetyllysine mark. Over residues 428–452 the composition is skewed to polar residues; that stretch reads GPQSLSGKSTPQPQSGKSTPSSGDV. Serine 431, serine 433, and serine 436 each carry phosphoserine. Phosphothreonine is present on residues threonine 437 and threonine 446. Residue serine 449 is modified to Phosphoserine.

The protein belongs to the TFIIF alpha subunit family. In terms of assembly, heterodimer of an alpha and a beta subunit. Interacts with GTF2F2, CTDP1, TAF6/TAFII80 and URI1. Interacts with GTF2B (via C-terminus and preferentially via acetylated form); this interaction prevents binding of GTF2B to GTF2F2. Part of TBP-based Pol II pre-initiation complex (PIC), in which Pol II core assembles with general transcription factors and other specific initiation factors including GTF2E1, GTF2E2, GTF2F1, GTF2F2, TCEA1, ERCC2, ERCC3, GTF2H2, GTF2H3, GTF2H4, GTF2H5, GTF2A1, GTF2A2, GTF2B and TBP; this large multi-subunit PIC complex mediates DNA unwinding and targets Pol II core to the transcription start site where the first phosphodiester bond forms. In terms of processing, phosphorylated on Ser and other residues by TAF1 and casein kinase II-like kinases.

The protein resides in the nucleus. In terms of biological role, TFIIF is a general transcription initiation factor that binds to RNA polymerase II and helps to recruit it to the initiation complex in collaboration with TFIIB. It promotes transcription elongation. This Bos taurus (Bovine) protein is General transcription factor IIF subunit 1 (GTF2F1).